The chain runs to 336 residues: E3 ubiquitin-protein ligase RING2 (336 aa).

The interaction with HIP2 stretch occupies residues 2-179; it reads TQTVQTNGVQ…AEDNGDSSHC (178 aa). The RING-type zinc finger occupies 51–91; sequence CPICLDMLKNTMTTKECLHRFCADCIITALRSGNKECPTCR. The interval 93–98 is interaction with nucleosomes via an acidic patch on histone H2A and histone H2B; it reads KLVSKR. A disordered region spans residues 158-218; the sequence is RGKKHQIENG…NATENGGGDI (61 aa). Residues 176 to 190 are compositionally biased toward polar residues; it reads SSHCSNASVHSNQEA.

In terms of assembly, component of chromatin-associated Polycomb (PcG) complexes. Component of a PRC1-like complex. Component of some MLL1/MLL complex.

Its subcellular location is the nucleus. The protein localises to the cytoplasm. The protein resides in the chromosome. The enzyme catalyses S-ubiquitinyl-[E2 ubiquitin-conjugating enzyme]-L-cysteine + [acceptor protein]-L-lysine = [E2 ubiquitin-conjugating enzyme]-L-cysteine + N(6)-ubiquitinyl-[acceptor protein]-L-lysine.. The protein operates within protein modification; protein ubiquitination. Its function is as follows. E3 ubiquitin-protein ligase that mediates monoubiquitination of 'Lys-119' of histone H2A (H2AK119Ub), thereby playing a central role in histone code and gene regulation. H2AK119Ub gives a specific tag for epigenetic transcriptional repression. Essential component of a Polycomb group (PcG) multiprotein PRC1-like complex, a complex class required to maintain the transcriptionally repressive state of many genes, including Hox genes, throughout development. PcG PRC1 complex acts via chromatin remodeling and modification of histones, rendering chromatin heritably changed in its expressibility. In Danio rerio (Zebrafish), this protein is E3 ubiquitin-protein ligase RING2 (rnf2).